The chain runs to 866 residues: MMSSGHKGPNVRNFFKWQRGESSSSLTTGLLHNESHEIELSNYGGIPSPGSESPSGLLNGESLNVQPIADLDLFVERLYSYYRDKGLWCIIVKWAVELLSLGFIICFSGFFLLYVDWNGLQNAKCGMDAVESGTKPCDLVKEAIHPHPLSPFTLTTAIIVGYLALFSVYWLFCFLRFFAQLKDTLDFRHFYYNNLHVTDNEILTMPWATVLEKVVQLQSSQCLCVVKDLSAHDMVMRLMRKENYLIGMLNKGLLSFPISHWIPGAGPAVKSAPDGTQYHLVLTKTLEWTLNWCILQSMFDCNFRVRRDFVSNPTTLKKRLFVVGLAMLLLSPFLVIFMLVYLFLRHAEQFYNHPSTASSRRWSNLSKWLFREFNEVDHLFKHRINSSVVHASEYLKQFPSPIISIIAKFVSFVSGGFAAVLIIIAFLEESLLEGHIFGRNLFWYAAVFGTITAISRAAISDELLVLDPVGTMSLVVQNTHYMPKRWRGKENKDDVRLELETLFQYTGMMLLEEIASIFITPFLLMFVVPKRVDDILQFIKDFTVDIEGVGHVCSFSAFYFENHGNIKYGSPHNATRREQRSSQGKMEKSFLSFQSSYPSWESDSLGKQFLSNLRTFRDRKLHEINTRHSSPSRAWRESTNTPALYRDIPRNPLASGNHTDSMWLIDPDQRNHPYLLDWYYTSQAHNRTDHPIERANEILTANQNATDCWPPDLGIRGEDSRDLLNMEASTSGQFFRESILRHDQPEGEDSYGSQHPLDGRNQWWGRGNHSQISTAHPATTNSFIEPPDFINRYTAGNLLDNSWSRRSIEEEDEEEEELDWEENARRNLSRTTFMDDNDIEAGIDLHFDDVYSSRPQETSTSSTTLR.

The Cytoplasmic segment spans residues 1–94 (MMSSGHKGPN…KGLWCIIVKW (94 aa)). A helical membrane pass occupies residues 95–115 (AVELLSLGFIICFSGFFLLYV). The Lumenal portion of the chain corresponds to 116-153 (DWNGLQNAKCGMDAVESGTKPCDLVKEAIHPHPLSPFT). Residues 154-174 (LTTAIIVGYLALFSVYWLFCF) form a helical membrane-spanning segment. At 175 to 319 (LRFFAQLKDT…VSNPTTLKKR (145 aa)) the chain is on the cytoplasmic side. An intramembrane segment occupies 320-340 (LFVVGLAMLLLSPFLVIFMLV). Residues 341-404 (YLFLRHAEQF…LKQFPSPIIS (64 aa)) lie on the Cytoplasmic side of the membrane. Residues 405-425 (IIAKFVSFVSGGFAAVLIIIA) traverse the membrane as a helical segment. Over 426 to 433 (FLEESLLE) the chain is Lumenal. The chain crosses the membrane as a helical span at residues 434-454 (GHIFGRNLFWYAAVFGTITAI). Residues 455-507 (SRAAISDELLVLDPVGTMSLVVQNTHYMPKRWRGKENKDDVRLELETLFQYTG) are Cytoplasmic-facing. Residues 508 to 528 (MMLLEEIASIFITPFLLMFVV) lie within the membrane without spanning it. Residues 529-866 (PKRVDDILQF…ETSTSSTTLR (338 aa)) lie on the Cytoplasmic side of the membrane. Residues 744 to 781 (QPEGEDSYGSQHPLDGRNQWWGRGNHSQISTAHPATTN) are disordered. Residues 768–781 (NHSQISTAHPATTN) show a composition bias toward polar residues.

It belongs to the ATG9 family. In terms of assembly, homotrimer; forms a homotrimer with a central pore that forms a path between the two membrane leaflets. In terms of tissue distribution, expressed in roots, leaves, stems and flowers.

Its subcellular location is the preautophagosomal structure membrane. Its function is as follows. Phospholipid scramblase involved in autophagy by mediating autophagosomal membrane expansion. Cycles between the preautophagosomal structure/phagophore assembly site (PAS) and the cytoplasmic vesicle pool and supplies membrane for the growing autophagosome. Lipid scramblase activity plays a key role in preautophagosomal structure/phagophore assembly by distributing the phospholipids that arrive through ATG2 from the cytoplasmic to the luminal leaflet of the bilayer, thereby driving autophagosomal membrane expansion. In addition to autophagy, also plays a role in necrotic cell death. Plays an essential role in plant nutrient recycling. The sequence is that of Autophagy-related protein 9 from Arabidopsis thaliana (Mouse-ear cress).